A 325-amino-acid chain; its full sequence is tRNA dimethylallyltransferase (325 aa).

ATP is bound at residue 21 to 28 (GPTASGKS). Residue 23–28 (TASGKS) participates in substrate binding. The interval 166-170 (QRLAR) is interaction with substrate tRNA.

This sequence belongs to the IPP transferase family. As to quaternary structure, monomer. Requires Mg(2+) as cofactor.

The catalysed reaction is adenosine(37) in tRNA + dimethylallyl diphosphate = N(6)-dimethylallyladenosine(37) in tRNA + diphosphate. Catalyzes the transfer of a dimethylallyl group onto the adenine at position 37 in tRNAs that read codons beginning with uridine, leading to the formation of N6-(dimethylallyl)adenosine (i(6)A). This chain is tRNA dimethylallyltransferase, found in Acidiphilium cryptum (strain JF-5).